Here is a 106-residue protein sequence, read N- to C-terminus: L-rhamnose mutarotase (106 aa).

Tyrosine 20 provides a ligand contact to substrate. The Proton donor role is filled by histidine 24. Substrate-binding positions include tyrosine 43 and 78–79 (WW).

It belongs to the rhamnose mutarotase family. Homodimer.

It is found in the cytoplasm. The catalysed reaction is alpha-L-rhamnose = beta-L-rhamnose. It participates in carbohydrate metabolism; L-rhamnose metabolism. Involved in the anomeric conversion of L-rhamnose. This chain is L-rhamnose mutarotase, found in Verminephrobacter eiseniae (strain EF01-2).